The sequence spans 211 residues: Beta-crystallin B3 (211 aa).

At Met-1 the chain carries N-acetylmethionine. Ala-2 bears the N-acetylalanine; in Beta-crystallin B3, N-terminally processed mark. Residues 2–23 (AEQHSTPEQAAAGKSHGGLGGS) form an N-terminal arm region. 2 consecutive Beta/gamma crystallin 'Greek key' domains span residues 24–63 (YKVIVYEMENFQGKRCELTAECPNLTESLLEKVGSIQVES) and 64–108 (GPWL…RPLH). The tract at residues 109-113 (IDGPD) is connecting peptide. 2 Beta/gamma crystallin 'Greek key' domains span residues 114-155 (HKLH…RAIN) and 156-198 (GTWV…RRIR). A C-terminal arm region spans residues 200 to 211 (QKWHKRGVFLSS).

This sequence belongs to the beta/gamma-crystallin family. Homo/heterodimer, or complexes of higher-order. The structure of beta-crystallin oligomers seems to be stabilized through interactions between the N-terminal arms.

Functionally, crystallins are the dominant structural components of the vertebrate eye lens. The sequence is that of Beta-crystallin B3 (CRYBB3) from Bos taurus (Bovine).